The chain runs to 362 residues: Cytochrome c oxidase subunit 2 (362 aa).

The first 28 residues, 1 to 28 (MEQQEKRGTVRKALLGSVIGFGGLALAG), serve as a signal peptide directing secretion. The N-palmitoyl cysteine moiety is linked to residue C29. A lipid anchor (S-diacylglycerol cysteine) is attached at C29. The next 2 membrane-spanning stretches (helical) occupy residues 60–80 (FWVWVWVTAWIIGFIMWGLFI) and 107–127 (IPLELVLTIVPIIIVMALFFF). A disordered region spans residues 171 to 206 (SDYVGTDEKRQEAAEKTKFDQGGDNPNPINGRSKTD). Residues 176–191 (TDEKRQEAAEKTKFDQ) show a composition bias toward basic and acidic residues. The segment covering 197–206 (NPINGRSKTD) has biased composition (polar residues). Residues H246, C287, E289, C291, H295, and M298 each coordinate Cu cation. Positions 325–362 (NSDALKSIGEAPYATSTHPFNSERATRDGANFDDTAAA) are disordered.

The protein belongs to the cytochrome c oxidase subunit 2 family. Associates with subunits I, III and IV to form cytochrome c oxidase. It depends on binuclear copper center (CuA) as a cofactor.

It localises to the cell membrane. The enzyme catalyses 4 Fe(II)-[cytochrome c] + O2 + 8 H(+)(in) = 4 Fe(III)-[cytochrome c] + 2 H2O + 4 H(+)(out). Subunits I and II form the functional core of the enzyme complex. Electrons originating in cytochrome c are transferred via heme a and Cu(A) to the binuclear center formed by heme a3 and Cu(B). The protein is Cytochrome c oxidase subunit 2 (ctaC) of Corynebacterium diphtheriae (strain ATCC 700971 / NCTC 13129 / Biotype gravis).